We begin with the raw amino-acid sequence, 379 residues long: Cytochrome b (379 aa).

Transmembrane regions (helical) follow at residues 34–54, 78–99, 114–134, and 179–199; these read FGSL…LLAM, WLIR…YLHI, WNTG…GYVL, and FFAL…IHLT. Residues histidine 84 and histidine 98 each coordinate heme b. Heme b-binding residues include histidine 183 and histidine 197. Histidine 202 contributes to the a ubiquinone binding site. 4 consecutive transmembrane segments (helical) span residues 227–247, 289–309, 321–341, and 348–368; these read LKDA…AFFS, LGGV…PFLH, LSQI…WIGS, and FIII…VLFP.

Belongs to the cytochrome b family. The cytochrome bc1 complex contains 11 subunits: 3 respiratory subunits (MT-CYB, CYC1 and UQCRFS1), 2 core proteins (UQCRC1 and UQCRC2) and 6 low-molecular weight proteins (UQCRH/QCR6, UQCRB/QCR7, UQCRQ/QCR8, UQCR10/QCR9, UQCR11/QCR10 and a cleavage product of UQCRFS1). This cytochrome bc1 complex then forms a dimer. Heme b is required as a cofactor.

The protein localises to the mitochondrion inner membrane. Component of the ubiquinol-cytochrome c reductase complex (complex III or cytochrome b-c1 complex) that is part of the mitochondrial respiratory chain. The b-c1 complex mediates electron transfer from ubiquinol to cytochrome c. Contributes to the generation of a proton gradient across the mitochondrial membrane that is then used for ATP synthesis. The protein is Cytochrome b (MT-CYB) of Rhea americana (Greater rhea).